The chain runs to 126 residues: MADEIAKAQVAQPGGDTIFGKIIRKEIPAKIIFEDDRCLAFHDISPQAPTHFLVIPKKHISQISVADDDDESLLGHLMIVGKKCAADLGLKRGYRMVVNEGADGGQSVYHIHLHVLGGRQMNWPPG.

A2 carries the post-translational modification N-acetylalanine. In terms of domain architecture, HIT spans 18–126; the sequence is IFGKIIRKEI…GGRQMNWPPG (109 aa). N6-acetyllysine is present on residues K21 and K30. Residue 43–44 participates in AMP binding; that stretch reads DI. Phosphoserine occurs at positions 45 and 72. AMP is bound by residues N99, 105 to 107, and 112 to 114; these read GQS and HLH. The Histidine triad motif motif lies at 110–114; it reads HIHLH. The active-site Tele-AMP-histidine intermediate is H112.

It belongs to the HINT family. In terms of assembly, homodimer. Interacts with CDK7. Interacts with RUVBL1 and RUVBL2 and is associated with the LEF1/TCF1-CTNNB1 complex and with a KAT5 histone acetyltransferase complex. Identified in a complex with MITF and CTNNB1. Interacts with CDC34 and RBX1, and is part of a SCF (SKP2-CUL1-F-box protein) E3 ubiquitin-protein ligase complex. Interacts with SUMO1, SUMO2 and RGS17. Interacts with the Ten-1 ICD form of TENM1. Interacts with CALM1; interaction increases in the presence of calcium ions.

Its subcellular location is the cytoplasm. The protein resides in the nucleus. It catalyses the reaction adenosine 5'-phosphoramidate + H2O = AMP + NH4(+). Functionally, exhibits adenosine 5'-monophosphoramidase activity, hydrolyzing purine nucleotide phosphoramidates with a single phosphate group such as adenosine 5'monophosphoramidate (AMP-NH2) to yield AMP and NH2. Hydrolyzes adenosine 5'monophosphomorpholidate (AMP-morpholidate) and guanosine 5'monophosphomorpholidate (GMP-morpholidate). Hydrolyzes lysyl-AMP (AMP-N-epsilon-(N-alpha-acetyl lysine methyl ester)) generated by lysine tRNA ligase, as well as Met-AMP, His-AMP and Asp-AMP, lysyl-GMP (GMP-N-epsilon-(N-alpha-acetyl lysine methyl ester)) and AMP-N-alanine methyl ester. Can also convert adenosine 5'-O-phosphorothioate and guanosine 5'-O-phosphorothioate to the corresponding nucleoside 5'-O-phosphates with concomitant release of hydrogen sulfide. In addition, functions as a scaffolding protein that modulates transcriptional activation by the LEF1/TCF1-CTNNB1 complex and by the complex formed with MITF and CTNNB1. Modulates p53/TP53 levels and p53/TP53-mediated apoptosis. Modulates proteasomal degradation of target proteins by the SCF (SKP2-CUL1-F-box protein) E3 ubiquitin-protein ligase complex. Also exhibits SUMO-specific isopeptidase activity, deconjugating SUMO1 from RANGAP1 and RGS17. The sequence is that of Adenosine 5'-monophosphoramidase HINT1 (Hint1) from Rattus norvegicus (Rat).